A 276-amino-acid polypeptide reads, in one-letter code: NADPH-dependent 7-cyano-7-deazaguanine reductase (276 aa).

83 to 85 is a binding site for substrate; the sequence is VES. 85-86 serves as a coordination point for NADPH; the sequence is SK. Cys184 (thioimide intermediate) is an active-site residue. Asp191 (proton donor) is an active-site residue. Position 223–224 (223–224) interacts with substrate; that stretch reads HE. 252-253 is a binding site for NADPH; the sequence is RG.

It belongs to the GTP cyclohydrolase I family. QueF type 2 subfamily. Homodimer.

It localises to the cytoplasm. The catalysed reaction is 7-aminomethyl-7-carbaguanine + 2 NADP(+) = 7-cyano-7-deazaguanine + 2 NADPH + 3 H(+). Its pathway is tRNA modification; tRNA-queuosine biosynthesis. Catalyzes the NADPH-dependent reduction of 7-cyano-7-deazaguanine (preQ0) to 7-aminomethyl-7-deazaguanine (preQ1). The protein is NADPH-dependent 7-cyano-7-deazaguanine reductase of Azotobacter vinelandii (strain DJ / ATCC BAA-1303).